The primary structure comprises 388 residues: MDPTCEESPAEDSNNEEEDLDSTKAAPRIRDTPEDIVLEAPASGLAFHPTRDLLAAGDVDGDVFVFAYSCQEGETKELWSSGHHLKSCRAVVFSEDGQKLVTVSKDKAIHILDVEQGQLERRISKAHSAPINSVLLVDENALVTGDDTGGIRLWDQRKEGPLMDMRQHEEYIADMALDPAKKLLLTASGDGCLGVFNIKRRRFELLSEPQSGDLTSVALMKYGKKVACGSSEGTIYLFNWNGFGATSDRFALRAESIDCIVPVTENLLCTGSTDGIIRAVNILPNRVVGTVGQHAGEPVEALALSHCGHFLASSGHDQRLKFWDMTQLRTVVVDDYRRRKKKGGPLRALSSKAWSTDDFFAGLREDEEDAKAPEEVVRESDDDDDDSD.

Acidic residues predominate over residues Met-1–Leu-20. Residues Met-1–Pro-33 form a disordered region. WD repeat units follow at residues Val-37 to Lys-76, His-83 to Arg-122, Ala-126 to Asp-164, Gln-167 to Leu-206, Pro-209 to Asp-248, Ala-251 to Thr-290, and Gln-293 to Val-333. Ser-355 carries the phosphoserine modification. The segment at Arg-364 to Asp-388 is disordered. The segment covering Ala-370–Glu-379 has biased composition (basic and acidic residues).

The protein belongs to the WD repeat WDR55 family.

It is found in the nucleus. It localises to the nucleolus. Its subcellular location is the cytoplasm. In terms of biological role, nucleolar protein that acts as a modulator of rRNA synthesis. Plays a central role during organogenesis. The protein is WD repeat-containing protein 55 (Wdr55) of Mus musculus (Mouse).